Here is a 456-residue protein sequence, read N- to C-terminus: Probable serine/threonine-protein kinase DDB_G0277449 (456 aa).

Residues 50–83 (STSPTECEESSSSTITTPSEESLSSGEESSSISD) are compositionally biased toward low complexity. The interval 50–84 (STSPTECEESSSSTITTPSEESLSSGEESSSISDS) is disordered. Residues 128–383 (FIIKHLVGKG…AIEIKRHPFF (256 aa)) form the Protein kinase domain. ATP contacts are provided by residues 134-142 (VGKGGFGKV) and Lys157. Asp251 functions as the Proton acceptor in the catalytic mechanism. Residues 384 to 455 (KSIQWRKIEN…VRTPVLLESQ (72 aa)) form the AGC-kinase C-terminal domain.

It belongs to the protein kinase superfamily. AGC Ser/Thr protein kinase family.

It catalyses the reaction L-seryl-[protein] + ATP = O-phospho-L-seryl-[protein] + ADP + H(+). The catalysed reaction is L-threonyl-[protein] + ATP = O-phospho-L-threonyl-[protein] + ADP + H(+). The polypeptide is Probable serine/threonine-protein kinase DDB_G0277449 (Dictyostelium discoideum (Social amoeba)).